The sequence spans 246 residues: Ribonuclease PH (246 aa).

Phosphate is bound by residues R91 and 129–131; that span reads GTR.

The protein belongs to the RNase PH family. As to quaternary structure, homohexameric ring arranged as a trimer of dimers.

It catalyses the reaction tRNA(n+1) + phosphate = tRNA(n) + a ribonucleoside 5'-diphosphate. In terms of biological role, phosphorolytic 3'-5' exoribonuclease that plays an important role in tRNA 3'-end maturation. Removes nucleotide residues following the 3'-CCA terminus of tRNAs; can also add nucleotides to the ends of RNA molecules by using nucleoside diphosphates as substrates, but this may not be physiologically important. Probably plays a role in initiation of 16S rRNA degradation (leading to ribosome degradation) during starvation. The protein is Ribonuclease PH of Burkholderia vietnamiensis (strain G4 / LMG 22486) (Burkholderia cepacia (strain R1808)).